The primary structure comprises 478 residues: Proline--tRNA ligase (478 aa).

This sequence belongs to the class-II aminoacyl-tRNA synthetase family. ProS type 3 subfamily. Homodimer.

It is found in the cytoplasm. The enzyme catalyses tRNA(Pro) + L-proline + ATP = L-prolyl-tRNA(Pro) + AMP + diphosphate. In terms of biological role, catalyzes the attachment of proline to tRNA(Pro) in a two-step reaction: proline is first activated by ATP to form Pro-AMP and then transferred to the acceptor end of tRNA(Pro). The protein is Proline--tRNA ligase of Clostridium botulinum (strain 657 / Type Ba4).